A 511-amino-acid polypeptide reads, in one-letter code: Inner membrane ABC transporter permease protein YnjC (511 aa).

Topologically, residues methionine 1 to alanine 8 are cytoplasmic. Residues leucine 9 to leucine 29 traverse the membrane as a helical segment. Topologically, residues threonine 30–threonine 62 are periplasmic. An ABC transmembrane type-1 1 domain is found at leucine 54–leucine 255. The chain crosses the membrane as a helical span at residues isoleucine 63–proline 83. Residues lysine 84–arginine 91 are Cytoplasmic-facing. A helical membrane pass occupies residues leucine 92–alanine 112. The Periplasmic segment spans residues aspartate 113–arginine 130. Residues phenylalanine 131 to leucine 151 traverse the membrane as a helical segment. At alanine 152–alanine 189 the chain is on the cytoplasmic side. The chain crosses the membrane as a helical span at residues leucine 190–isoleucine 210. The Periplasmic segment spans residues leucine 211–alanine 239. A helical transmembrane segment spans residues leucine 240–tryptophan 260. At arginine 261 to asparagine 284 the chain is on the cytoplasmic side. Residues threonine 285 to alanine 305 form a helical membrane-spanning segment. At aspartate 306–serine 318 the chain is on the periplasmic side. One can recognise an ABC transmembrane type-1 2 domain in the interval leucine 315 to threonine 496. A helical transmembrane segment spans residues leucine 319–tryptophan 339. Residues glycine 340–glutamine 345 lie on the Cytoplasmic side of the membrane. Residues leucine 346 to leucine 366 traverse the membrane as a helical segment. The Periplasmic segment spans residues alanine 367–glycine 374. Residues serine 375–leucine 395 form a helical membrane-spanning segment. The Cytoplasmic portion of the chain corresponds to glutamine 396–proline 432. Residues valine 433–tryptophan 453 traverse the membrane as a helical segment. Residues leucine 454 to glutamine 485 lie on the Periplasmic side of the membrane. The chain crosses the membrane as a helical span at residues leucine 486–valine 506. Topologically, residues arginine 507–arginine 511 are cytoplasmic.

This sequence belongs to the binding-protein-dependent transport system permease family.

It is found in the cell inner membrane. Functionally, probably part of the binding-protein-dependent transport system YnjCD. Probably responsible for the translocation of the substrate across the membrane. This chain is Inner membrane ABC transporter permease protein YnjC (ynjC), found in Escherichia coli (strain K12).